Consider the following 172-residue polypeptide: Protein-export protein SecB (172 aa).

Belongs to the SecB family. In terms of assembly, homotetramer, a dimer of dimers. One homotetramer interacts with 1 SecA dimer.

The protein localises to the cytoplasm. In terms of biological role, one of the proteins required for the normal export of preproteins out of the cell cytoplasm. It is a molecular chaperone that binds to a subset of precursor proteins, maintaining them in a translocation-competent state. It also specifically binds to its receptor SecA. This is Protein-export protein SecB from Xylella fastidiosa (strain Temecula1 / ATCC 700964).